We begin with the raw amino-acid sequence, 238 residues long: Flagellar L-ring protein (238 aa).

The signal sequence occupies residues 1–23 (MIKLFICQKKYYLTAIFLLTIQS). The N-palmitoyl cysteine moiety is linked to residue Cys-24. A lipid anchor (S-diacylglycerol cysteine) is attached at Cys-24.

The protein belongs to the FlgH family. As to quaternary structure, the basal body constitutes a major portion of the flagellar organelle and consists of four rings (L,P,S, and M) mounted on a central rod.

It is found in the cell outer membrane. The protein localises to the bacterial flagellum basal body. Its function is as follows. Assembles around the rod to form the L-ring and probably protects the motor/basal body from shearing forces during rotation. The protein is Flagellar L-ring protein of Buchnera aphidicola subsp. Acyrthosiphon pisum (strain 5A).